The sequence spans 689 residues: Beta-adrenergic receptor kinase 1 (689 aa).

Residues 1 to 190 (MADLEAVLAD…ELNIHLTMND (190 aa)) are N-terminal. Residues 54–175 (TFEKIFSQKL…IESDKFTRFC (122 aa)) enclose the RGS domain. Positions 191–453 (FSVHRIIGRG…AQEVKESPFF (263 aa)) constitute a Protein kinase domain. ATP-binding positions include 197 to 205 (IGRGGFGEV) and K220. Catalysis depends on D317, which acts as the Proton acceptor. The 68-residue stretch at 454–521 (RSLDWQMVFL…TISERWQQEV (68 aa)) folds into the AGC-kinase C-terminal domain. A PH domain is found at 558–652 (DCIMHGYMSK…WKKELRDAYR (95 aa)). A Phosphoserine modification is found at S670.

Belongs to the protein kinase superfamily. AGC Ser/Thr protein kinase family. GPRK subfamily. In terms of assembly, interacts with the heterodimer formed by GNB1 and GNG2. Interacts with GIT1. Interacts with, and phosphorylates chemokine-stimulated CCR5. Interacts with ARRB1. Interacts with LPAR1 and LPAR2. Interacts with RALA in response to LPAR1 activation. ADRBK1 and RALA mutually inhibit each other's binding to LPAR1. Interacts with ADRB2.

Its subcellular location is the cytoplasm. The protein resides in the cell membrane. It localises to the postsynapse. The protein localises to the presynapse. It carries out the reaction [beta-adrenergic receptor] + ATP = [beta-adrenergic receptor]-phosphate + ADP + H(+). In contrast to other AGC family kinases, the catalytic activity is solely regulated by the binding of substrates and ligands, not by phosphorylation of the kinase domain. In terms of biological role, specifically phosphorylates the agonist-occupied form of the beta-adrenergic and closely related receptors, probably inducing a desensitization of them. Key regulator of LPAR1 signaling. Competes with RALA for binding to LPAR1 thus affecting the signaling properties of the receptor. Desensitizes LPAR1 and LPAR2 in a phosphorylation-independent manner. Positively regulates ciliary smoothened (SMO)-dependent Hedgehog (Hh) signaling pathway by facilitating the trafficking of SMO into the cilium and the stimulation of SMO activity. Inhibits relaxation of airway smooth muscle in response to blue light. The polypeptide is Beta-adrenergic receptor kinase 1 (Mesocricetus auratus (Golden hamster)).